Reading from the N-terminus, the 490-residue chain is MGSISEMVFETCPSPNPIHVMLVSFQGQGHVNPLLRLGKLIASKGLLVTFVTTELWGKKMRQANKIVDGELKPVGSGSIRFEFFDEEWAEDDDRRADFSLYIAHLESVGIREVSKLVRRYEEANEPVSCLINNPFIPWVCHVAEEFNIPCAVLWVQSCACFSAYYHYQDGSVSFPTETEPELDVKLPCVPVLKNDEIPSFLHPSSRFTGFRQAILGQFKNLSKSFCVLIDSFDSLEQEVIDYMSSLCPVKTVGPLFKVARTVTSDVSGDICKSTDKCLEWLDSRPKSSVVYISFGTVAYLKQEQIEEIAHGVLKSGLSFLWVIRPPPHDLKVETHVLPQELKESSAKGKGMIVDWCPQEQVLSHPSVACFVTHCGWNSTMESLSSGVPVVCCPQWGDQVTDAVYLIDVFKTGVRLGRGATEERVVPREEVAEKLLEATVGEKAEELRKNALKWKAEAEAAVAPGGSSDKNFREFVEKLGAGVTKTKDNGY.

The Proton acceptor role is filled by H30. H30 contributes to the an anthocyanidin binding site. Positions 358, 373, 376, 377, 378, and 381 each coordinate UDP-alpha-D-glucose. G396 serves as a coordination point for an anthocyanidin. UDP-alpha-D-glucose-binding residues include D397 and Q398.

Belongs to the UDP-glycosyltransferase family. As to expression, expressed in roots, flowers and siliques.

It catalyses the reaction (E)-4-coumarate + UDP-alpha-D-glucose = 4-O-(beta-D-glucosyl)-trans-4-coumarate + UDP + H(+). The enzyme catalyses (E)-ferulate + UDP-alpha-D-glucose = 1-O-[(E)-feruloyl]-beta-D-glucose + UDP. The catalysed reaction is (E)-caffeate + UDP-alpha-D-glucose = 1-O-[(E)-caffeoyl]-beta-D-glucose + UDP. It carries out the reaction (E)-sinapate + UDP-alpha-D-glucose = 1-O-(trans-sinapoyl)-beta-D-glucose + UDP. It catalyses the reaction (E)-cinnamate + UDP-alpha-D-glucose = 1-O-(trans-cinnamoyl)-beta-D-glucose + UDP. Its function is as follows. UDP-glucosyltransferase that forms glucose esters with phenylpropanoids. Glucosylates 4-coumarate, ferulate, caffeate, sinapate and cinnamate. Can glucosylate the phytotoxic xenobiotic compound 2,4,5-trichlorophenol (TCP). The polypeptide is UDP-glycosyltransferase 84A1 (Arabidopsis thaliana (Mouse-ear cress)).